We begin with the raw amino-acid sequence, 277 residues long: Prohibitin-3, mitochondrial (277 aa).

N-acetylglycine is present on Gly-2. The Mitochondrial matrix portion of the chain corresponds to Gly-2–Ala-6. Residues Ala-7–Leu-28 traverse the membrane as a helical; Signal-anchor for type II membrane protein segment. Residues Asn-29–Arg-277 lie on the Mitochondrial intermembrane side of the membrane.

The protein belongs to the prohibitin family. As to quaternary structure, component of a prohibitin multimeric complex in mitochondrial membranes. In terms of tissue distribution, mostly expressed in proliferative tissues, including vasculature, shoot and root apical tissues. Expressed in roots, stems, leaves and flowers (at protein level).

It is found in the cell membrane. The protein resides in the mitochondrion inner membrane. It localises to the nucleus. The protein localises to the cytoplasm. In terms of biological role, prohibitin probably acts as a holdase/unfoldase for the stabilization of newly synthesized mitochondrial proteins. Necessary for mitochondrial and cell metabolism and biogenesis. Required to regulate the ethylene-mediated signaling; involved in growth maintenance in the presence of ethylene. Functions in nitric oxide (NO)-mediated responses and in hydrogen peroxide-induced NO accumulation. The protein is Prohibitin-3, mitochondrial (PHB3) of Arabidopsis thaliana (Mouse-ear cress).